Consider the following 118-residue polypeptide: Basic phospholipase A2 PA-11 (118 aa).

7 disulfides stabilise this stretch: Cys-11–Cys-71, Cys-27–Cys-117, Cys-29–Cys-45, Cys-44–Cys-98, Cys-51–Cys-91, Cys-60–Cys-84, and Cys-78–Cys-89. The Ca(2+) site is built by Tyr-28, Gly-30, and Gly-32. His-48 is a catalytic residue. Asp-49 contributes to the Ca(2+) binding site. Asp-92 is a catalytic residue.

It belongs to the phospholipase A2 family. Group I subfamily. D49 sub-subfamily. Ca(2+) serves as cofactor. Expressed by the venom gland.

It localises to the secreted. The enzyme catalyses a 1,2-diacyl-sn-glycero-3-phosphocholine + H2O = a 1-acyl-sn-glycero-3-phosphocholine + a fatty acid + H(+). In terms of biological role, PLA2 catalyzes the calcium-dependent hydrolysis of the 2-acyl groups in 3-sn-phosphoglycerides. The protein is Basic phospholipase A2 PA-11 of Pseudechis australis (Mulga snake).